Here is a 26-residue protein sequence, read N- to C-terminus: Morintide mO4 (26 aa).

A Chitin-binding type-1 domain is found at 1 to 26 (NRLCCSQYGFCGTTSEYCSRVSGCQS). A disulfide bond links C4 and C18.

In terms of tissue distribution, seeds (at protein level).

In terms of biological role, chitin-binding protein which functions in defense against chitin-containing fungal pathogens. The chain is Morintide mO4 from Moringa oleifera (Horseradish tree).